A 305-amino-acid chain; its full sequence is Oxygen-dependent coproporphyrinogen-III oxidase (305 aa).

Residue S94 participates in substrate binding. Residues H98 and H108 each coordinate a divalent metal cation. H108 functions as the Proton donor in the catalytic mechanism. 110 to 112 (NVR) is a substrate binding site. A divalent metal cation-binding residues include H147 and H177. The tract at residues 242 to 277 (YVEFNLVYDRGTLFGLQTGGRTESILMSMPPLVRWE) is important for dimerization. 260–262 (GGR) is a binding site for substrate.

Belongs to the aerobic coproporphyrinogen-III oxidase family. Homodimer. The cofactor is a divalent metal cation.

The protein localises to the cytoplasm. The enzyme catalyses coproporphyrinogen III + O2 + 2 H(+) = protoporphyrinogen IX + 2 CO2 + 2 H2O. Its pathway is porphyrin-containing compound metabolism; protoporphyrin-IX biosynthesis; protoporphyrinogen-IX from coproporphyrinogen-III (O2 route): step 1/1. Functionally, involved in the heme biosynthesis. Catalyzes the aerobic oxidative decarboxylation of propionate groups of rings A and B of coproporphyrinogen-III to yield the vinyl groups in protoporphyrinogen-IX. This Shewanella denitrificans (strain OS217 / ATCC BAA-1090 / DSM 15013) protein is Oxygen-dependent coproporphyrinogen-III oxidase.